A 420-amino-acid chain; its full sequence is Arginine biosynthesis bifunctional protein ArgJ (420 aa).

Positions 167, 193, 204, 284, 415, and 420 each coordinate substrate. The active-site Nucleophile is the T204.

The protein belongs to the ArgJ family. Heterotetramer of two alpha and two beta chains.

The protein resides in the cytoplasm. It carries out the reaction N(2)-acetyl-L-ornithine + L-glutamate = N-acetyl-L-glutamate + L-ornithine. The enzyme catalyses L-glutamate + acetyl-CoA = N-acetyl-L-glutamate + CoA + H(+). The protein operates within amino-acid biosynthesis; L-arginine biosynthesis; L-ornithine and N-acetyl-L-glutamate from L-glutamate and N(2)-acetyl-L-ornithine (cyclic): step 1/1. Its pathway is amino-acid biosynthesis; L-arginine biosynthesis; N(2)-acetyl-L-ornithine from L-glutamate: step 1/4. Catalyzes two activities which are involved in the cyclic version of arginine biosynthesis: the synthesis of N-acetylglutamate from glutamate and acetyl-CoA as the acetyl donor, and of ornithine by transacetylation between N(2)-acetylornithine and glutamate. This chain is Arginine biosynthesis bifunctional protein ArgJ, found in Prochlorococcus marinus (strain NATL2A).